Reading from the N-terminus, the 396-residue chain is MITSIDIADVTYSAKPRILVPYKTQWEVASHLPEYRKLAERVEFYKYEMSTKDDFVKFLETHRINGFWLTEEFFTVLGNPSSYIEFFPASLKVILVPWVGCDFIDGKLLRSKGITLCNIGPHAADHVTELAIFLAISCFRMTSFWEYCFKYVENGNVEQCKKYISSDSYEIVTDSYHGQEMKFPSRTDKCKPNKDRKVVHLAEKYTVGGKKMESPMNKKVLILGFGSIGQNIGSNLHKVFNMSIEYYKRTGPVQKSLLDYNAKYHSDLDDPNTWKNADLIILALPSTASTNNIINRKSLAWCKDGVRIVNVGRGTCIDEDVLLDALESGKVASCGLDVFKNEETRVKQELLRRWDVTALPHIGSTVADMVIKQTLITLENVQDIFVEGGDGKYVLN.

NAD(+) is bound by residues 227-228 (SI), 311-313 (VGR), and Asp-337. Residue Arg-313 is part of the active site. Residue Glu-342 is part of the active site. His-361 (proton donor) is an active-site residue. 361-364 (HIGS) contributes to the NAD(+) binding site.

It belongs to the D-isomer specific 2-hydroxyacid dehydrogenase family.

Functionally, putative 2-hydroxyacid dehydrogenase. This is Putative 2-hydroxyacid dehydrogenase YPL113C from Saccharomyces cerevisiae (strain ATCC 204508 / S288c) (Baker's yeast).